The following is a 131-amino-acid chain: MFFRTSSLFTTIVAFTVMAAAMPGNPKPTTTTVTVTAPAHPTATAPASECKTGPVQCCNSVQSSKSPAASLLLGLLGIVLQGVAVPVGLTCNPITVIGVGGNSCSAQTVCCENNNFSGLIAIGCTPINLSL.

The signal sequence occupies residues 1–21 (MFFRTSSLFTTIVAFTVMAAA). 4 cysteine pairs are disulfide-bonded: Cys50–Cys110, Cys57–Cys104, Cys58–Cys91, and Cys111–Cys124. 2 N-linked (GlcNAc...) asparagine glycosylation sites follow: Asn115 and Asn128.

The protein belongs to the fungal hydrophobin family. As to quaternary structure, self-assembles to form functional amyloid fibrils called rodlets. Self-assembly into fibrillar rodlets occurs spontaneously at hydrophobic:hydrophilic interfaces and the rodlets further associate laterally to form amphipathic monolayers. Expressionn is switched off in the fruiting bodies but abundantly expressed in the vegetative mycelium of both monokaryon and dikaryon.

The protein localises to the secreted. Its subcellular location is the cell wall. In terms of biological role, aerial growth, conidiation, and dispersal of filamentous fungi in the environment rely upon a capability of their secreting small amphipathic proteins called hydrophobins (HPBs) with low sequence identity. Class I can self-assemble into an outermost layer of rodlet bundles on aerial cell surfaces, conferring cellular hydrophobicity that supports fungal growth, development and dispersal; whereas Class II form highly ordered films at water-air interfaces through intermolecular interactions but contribute nothing to the rodlet structure. POH2 is a class I hydrophobin that causes a large drop in the water-surface tension, enabling hyphae to breach the interface and grow into the air, in both the primary and the secondary mycelium. In the latter mycelium POH2 maight also play a role in the emergence of fruiting bodies. Secreted POH2 could also play a role in facilitating lignin degradation. This is Class I hydrophobin POH2 from Pleurotus ostreatus (Oyster mushroom).